We begin with the raw amino-acid sequence, 307 residues long: MVSSTTSEVQPTMGVKIFSAGVSACLADIITFPLDTAKVRLQIQGEGQASSTIRYKGVLGTITTLAKTEGLPKLYSGLPAGIQRQISFASLRIGLYDTVQEYFSSGRETPASLGSKISAGLMTGGVAVFIGQPTEVVKVRMQAQSHLHGIKPRYTGTYNAYRVIATTESLSTLWKGTTPNLMRNVIINCTELVTYDLMKGALVNHHILADDVPCHLLSALVAGFCTTLLASPVDVVKTRFINSLPGQYPSVPSCAMTMYTKEGPAAFFKGFAPSFLRLGSWNVIMFVCFEQLKKELMKSRQTVDCTT.

Over 1-10 the chain is Mitochondrial intermembrane; the sequence is MVSSTTSEVQ. Residues 11 to 32 form a helical membrane-spanning segment; sequence PTMGVKIFSAGVSACLADIITF. 3 Solcar repeats span residues 11 to 102, 111 to 201, and 210 to 295; these read PTMG…VQEY, ASLG…MKGA, and DDVP…LKKE. At 33 to 73 the chain is on the mitochondrial matrix side; that stretch reads PLDTAKVRLQIQGEGQASSTIRYKGVLGTITTLAKTEGLPK. A fatty acid 16:0-binding site is contributed by lysine 56. Residues 74–96 form a helical membrane-spanning segment; it reads LYSGLPAGIQRQISFASLRIGLY. Residues 97–116 lie on the Mitochondrial intermembrane side of the membrane; the sequence is DTVQEYFSSGRETPASLGSK. The chain crosses the membrane as a helical span at residues 117–133; the sequence is ISAGLMTGGVAVFIGQP. The Mitochondrial matrix segment spans residues 134 to 178; sequence TEVVKVRMQAQSHLHGIKPRYTGTYNAYRVIATTESLSTLWKGTT. Residues 179–195 form a helical membrane-spanning segment; the sequence is PNLMRNVIINCTELVTY. Over 196–212 the chain is Mitochondrial intermembrane; it reads DLMKGALVNHHILADDV. A helical transmembrane segment spans residues 213–232; the sequence is PCHLLSALVAGFCTTLLASP. Residues 233–266 are Mitochondrial matrix-facing; it reads VDVVKTRFINSLPGQYPSVPSCAMTMYTKEGPAA. Cysteine 254 is modified (cysteine sulfenic acid (-SOH)). Residues 267 to 289 traverse the membrane as a helical segment; that stretch reads FFKGFAPSFLRLGSWNVIMFVCF. Residue lysine 269 coordinates fatty acid 16:0. Topologically, residues 290–307 are mitochondrial intermembrane; that stretch reads EQLKKELMKSRQTVDCTT.

Belongs to the mitochondrial carrier (TC 2.A.29) family. In terms of assembly, most probably functions as a monomer. Binds one purine nucleotide per monomer. However, has also been suggested to function as a homodimer or a homotetramer. Tightly associates with cardiolipin in the mitochondrion inner membrane; may stabilize and regulate its activity. May undergo ubiquitin-mediated proteasomal degradation. Post-translationally, may undergo sulfenylation upon cold exposure. May increase the sensitivity of UCP1 thermogenic function to the activation by noradrenaline probably through structural effects. In terms of tissue distribution, brown adipose tissue.

It localises to the mitochondrion inner membrane. It catalyses the reaction H(+)(in) = H(+)(out). Has no constitutive proton transporter activity and has to be activated by long-chain fatty acids/LCFAs. Inhibited by purine nucleotides. Both purine nucleotides and LCFAs bind the cytosolic side of the transporter and directly compete to activate or inhibit it. Activated by noradrenaline and reactive oxygen species. Despite lacking canonical translational encoding for selenocysteine, a small pool of the protein has been observed to selectively incorporate selenocysteine at 'Cys-254'. Selenocysteine-modified protein is highly sensitive to redox modification and may constitute a pool of protein highly sensitive to activation by elevated levels of reactive oxygen species (ROS). In terms of biological role, mitochondrial protein responsible for thermogenic respiration, a specialized capacity of brown adipose tissue and beige fat that participates in non-shivering adaptive thermogenesis to temperature and diet variations and more generally to the regulation of energy balance. Functions as a long-chain fatty acid/LCFA and proton symporter, simultaneously transporting one LCFA and one proton through the inner mitochondrial membrane. However, LCFAs remaining associated with the transporter via their hydrophobic tails, it results in an apparent transport of protons activated by LCFAs. Thereby, dissipates the mitochondrial proton gradient and converts the energy of substrate oxydation into heat instead of ATP. Regulates the production of reactive oxygen species/ROS by mitochondria. The polypeptide is Mitochondrial brown fat uncoupling protein 1 (Rattus norvegicus (Rat)).